We begin with the raw amino-acid sequence, 509 residues long: Zinc finger protein Aiolos (509 aa).

Residues 1-85 (MEDIKPNVEL…PMGNAEEPEI (85 aa)) are disordered. The span at 10–20 (LKSTQEQSVPT) shows a compositional bias: polar residues. Phosphothreonine is present on threonine 20. Residues 56 to 72 (DSMKVKDEYSERDENVL) are compositionally biased toward basic and acidic residues. Residues lysine 61, lysine 73, and lysine 100 each participate in a glycyl lysine isopeptide (Lys-Gly) (interchain with G-Cter in SUMO2) cross-link. C2H2-type zinc fingers lie at residues 118-140 (MNCD…KRSH), 146-168 (FQCN…IKLH), and 174-196 (FKCH…LRTH). Residues 202–224 (YKCEFCGRSYKQRSSLEEHKERC) form a C2H2-type 4; atypical zinc finger. Residue lysine 245 forms a Glycyl lysine isopeptide (Lys-Gly) (interchain with G-Cter in SUMO2) linkage. Threonine 326 is subject to Phosphothreonine. The disordered stretch occupies residues 365–421 (HLPEKSLPSERGLSPTNSGHDSTDTDSNHEERQNHIYQQNPMVPPRARNGMPLLKEG). Serine 378 carries the post-translational modification Phosphoserine. A compositionally biased stretch (basic and acidic residues) spans 385 to 398 (DSTDTDSNHEERQN). The C2H2-type 5 zinc finger occupies 452-474 (YRCDHCRVLFLDYVMFTIHMGCH). The tract at residues 452-504 (YRCDHCRVLFLDYVMFTIHMGCHGFRDPFECNMCGYRSHDRYEFSSHIARGEH) is mediates homodimerization and heterodimerization. A C2H2-type 6; atypical zinc finger spans residues 480 to 504 (FECNMCGYRSHDRYEFSSHIARGEH).

The protein belongs to the Ikaros C2H2-type zinc-finger protein family. As to quaternary structure, homodimer. Heterodimer with other IKAROS family members. Interacts with IKZF4 and IKZF5. Interacts with IKZF1. Interacts with HRAS. Interacts with FOXP3; this interaction may be required for silencing target genes and regulating the suppressive activity of FOXP3-positive regulatory T-cells (Treg). Interacts with BCL21L; this interaction blocks the anti-apoptotic role of BCL21L. Associates with histone deacetylase complexes containing HDAC1, MTA2 and SIN3A.

It is found in the nucleus. The protein resides in the cytoplasm. In terms of biological role, transcription factor that plays an important role in the regulation of lymphocyte differentiation. Plays an essential role in regulation of B-cell differentiation, proliferation and maturation to an effector state. Involved in regulating BCL2 expression and controlling apoptosis in T-cells in an IL2-dependent manner. The chain is Zinc finger protein Aiolos (IKZF3) from Bos taurus (Bovine).